Here is a 137-residue protein sequence, read N- to C-terminus: Transcription antitermination protein NusB (137 aa).

Belongs to the NusB family.

Its function is as follows. Involved in transcription antitermination. Required for transcription of ribosomal RNA (rRNA) genes. Binds specifically to the boxA antiterminator sequence of the ribosomal RNA (rrn) operons. The sequence is that of Transcription antitermination protein NusB from Haemophilus ducreyi (strain 35000HP / ATCC 700724).